The primary structure comprises 296 residues: Protein FAM110A (296 aa).

Disordered stretches follow at residues 61-97 and 117-192; these read NTRQ…PCSG and PVSP…KSDL. Pro residues-rich tracts occupy residues 139 to 148 and 161 to 170; these read PATPPRPPPS and PASPARPYPS.

The protein belongs to the FAM110 family. As to quaternary structure, may interact with CSPP1.

It is found in the cytoplasm. It localises to the cytoskeleton. Its subcellular location is the microtubule organizing center. The protein resides in the centrosome. The protein localises to the spindle pole. In Mus musculus (Mouse), this protein is Protein FAM110A (Fam110a).